Reading from the N-terminus, the 708-residue chain is DNA-directed RNA polymerase III subunit RPC5 (708 aa).

The span at 146–155 (DAKHREREAA) shows a compositional bias: basic and acidic residues. Positions 146–170 (DAKHREREAANEAGDSSQDEAEDDV) are disordered. A phosphoserine mark is found at serine 161 and serine 162. A Glycyl lysine isopeptide (Lys-Gly) (interchain with G-Cter in SUMO2) cross-link involves residue lysine 171. Phosphoserine is present on serine 192. Position 224 is a phosphotyrosine (tyrosine 224). Residue lysine 432 forms a Glycyl lysine isopeptide (Lys-Gly) (interchain with G-Cter in SUMO2) linkage. The interval 485–552 (QLRVPAVPPG…DSFNGHPPQG (68 aa)) is disordered. A Glycyl lysine isopeptide (Lys-Gly) (interchain with G-Cter in SUMO1); alternate cross-link involves residue lysine 498. Lysine 498 is covalently cross-linked (Glycyl lysine isopeptide (Lys-Gly) (interchain with G-Cter in SUMO2); alternate). Residues 502–519 (VSEEGEEDEEQEAEEEPM) show a composition bias toward acidic residues. Phosphoserine occurs at positions 503 and 522. The tract at residues 556–708 (TPVARELKAF…MWYLKGTVQS (153 aa)) is required for Pol III complex stability. Lysine 659 is covalently cross-linked (Glycyl lysine isopeptide (Lys-Gly) (interchain with G-Cter in SUMO2)).

As to quaternary structure, component of the RNA polymerase III complex consisting of at least 17 subunits: a ten-subunit horseshoe-shaped catalytic core composed of POLR3A/RPC1, POLR3B/RPC2, POLR1C/RPAC1, POLR1D/RPAC2, POLR3K/RPC10, POLR2E/RPABC1, POLR2F/RPABC2, POLR2H/RPABC3, POLR2K/RPABC4 and POLR2L/RPABC5; the stalk composed of two subunits POLR3H/RPC8 and CRCP/RPC9, forming a structural mobile part that protrudes out of the core and functions primarily in transcription initiation; and additional subunits homologous to general transcription factors of the RNA polymerase II machinery, POLR3D/RPC4-POLR3E/RPC5 heterodimer and POLR3/CRPC3-POLR3F/RPC6-POLR3G/RPC7 heterotrimer.

It is found in the nucleus. Functionally, DNA-dependent RNA polymerase catalyzes the transcription of DNA into RNA using the four ribonucleoside triphosphates as substrates. Specific peripheric component of RNA polymerase III (Pol III) which synthesizes small non-coding RNAs including 5S rRNA, snRNAs, tRNAs and miRNAs from at least 500 distinct genomic loci. Assembles with POLR3D/RPC4 forming a subcomplex that binds the Pol III core. Enables recruitment of Pol III at transcription initiation site and drives transcription initiation from both type 2 and type 3 DNA promoters. Required for efficient transcription termination and reinitiation. Plays a key role in sensing and limiting infection by intracellular bacteria and DNA viruses. Acts as a nuclear and cytosolic DNA sensor involved in innate immune response. Can sense non-self dsDNA that serves as template for transcription into dsRNA. The non-self RNA polymerase III transcripts, such as Epstein-Barr virus-encoded RNAs (EBERs) induce type I interferon and NF-kappa-B through the RIG-I pathway. The chain is DNA-directed RNA polymerase III subunit RPC5 from Homo sapiens (Human).